Consider the following 199-residue polypeptide: Probable nicotinate-nucleotide adenylyltransferase (199 aa).

Belongs to the NadD family.

It carries out the reaction nicotinate beta-D-ribonucleotide + ATP + H(+) = deamido-NAD(+) + diphosphate. The protein operates within cofactor biosynthesis; NAD(+) biosynthesis; deamido-NAD(+) from nicotinate D-ribonucleotide: step 1/1. In terms of biological role, catalyzes the reversible adenylation of nicotinate mononucleotide (NaMN) to nicotinic acid adenine dinucleotide (NaAD). This is Probable nicotinate-nucleotide adenylyltransferase from Rhizobium johnstonii (strain DSM 114642 / LMG 32736 / 3841) (Rhizobium leguminosarum bv. viciae).